Reading from the N-terminus, the 507-residue chain is Glycerol kinase (507 aa).

Position 14 (T14) interacts with ADP. Residues T14, T15, and S16 each coordinate ATP. T14 serves as a coordination point for sn-glycerol 3-phosphate. R18 lines the ADP pocket. Residues R84, E85, Y137, and D247 each coordinate sn-glycerol 3-phosphate. 5 residues coordinate glycerol: R84, E85, Y137, D247, and Q248. ADP-binding residues include T269 and G312. 4 residues coordinate ATP: T269, G312, Q316, and G413. 2 residues coordinate ADP: G413 and N417.

The protein belongs to the FGGY kinase family.

It carries out the reaction glycerol + ATP = sn-glycerol 3-phosphate + ADP + H(+). The protein operates within polyol metabolism; glycerol degradation via glycerol kinase pathway; sn-glycerol 3-phosphate from glycerol: step 1/1. Its activity is regulated as follows. Inhibited by fructose 1,6-bisphosphate (FBP). Key enzyme in the regulation of glycerol uptake and metabolism. Catalyzes the phosphorylation of glycerol to yield sn-glycerol 3-phosphate. The chain is Glycerol kinase from Psychromonas ingrahamii (strain DSM 17664 / CCUG 51855 / 37).